Reading from the N-terminus, the 333-residue chain is Thiamine-monophosphate kinase (333 aa).

Residues Asp44, Ser58, Thr59, and Asp60 each contribute to the Mg(2+) site. His67 lines the substrate pocket. Mg(2+) is bound by residues Asp89 and Asp137. Residues 136-137 (GD) and Arg162 contribute to the ATP site. Asp224 contacts Mg(2+). Residue Ser226 participates in ATP binding. Asp227 serves as a coordination point for Mg(2+). Glu278 and Trp320 together coordinate substrate.

It belongs to the thiamine-monophosphate kinase family.

The enzyme catalyses thiamine phosphate + ATP = thiamine diphosphate + ADP. It functions in the pathway cofactor biosynthesis; thiamine diphosphate biosynthesis; thiamine diphosphate from thiamine phosphate: step 1/1. Catalyzes the ATP-dependent phosphorylation of thiamine-monophosphate (TMP) to form thiamine-pyrophosphate (TPP), the active form of vitamin B1. This chain is Thiamine-monophosphate kinase, found in Mycobacterium tuberculosis (strain CDC 1551 / Oshkosh).